The chain runs to 705 residues: Solute carrier family 28 member 3 (705 aa).

Basic and acidic residues predominate over residues 1 to 21; the sequence is MSRSDPDPGKNSEPSKSKMSL. The segment at 1–96 is disordered; that stretch reads MSRSDPDPGK…TEEESEDERQ (96 aa). Topologically, residues 1–119 are cytoplasmic; it reads MSRSDPDPGK…FCRKHRVILQ (119 aa). A compositionally biased stretch (polar residues) spans 48 to 63; that stretch reads APGNSTVRSRVVQSGE. Residues 65–74 show a composition bias toward basic and acidic residues; the sequence is GRAKQDDRQI. Residues 120 to 140 form a helical membrane-spanning segment; the sequence is HTIWAVLLTGFLALVIAACAL. At 141–145 the chain is on the extracellular side; sequence NFHRA. Residues 146–166 form a helical membrane-spanning segment; it reads LPLFVITLVTIFFVVWDRLMA. Residues 167–190 lie on the Cytoplasmic side of the membrane; sequence KYEQRIDDVLSPGKRLLERHWFWL. The chain crosses the membrane as a helical span at residues 191–211; it reads KWVVWCSLILAVILWLALDTA. The Extracellular segment spans residues 212 to 214; that stretch reads RLG. The chain crosses the membrane as a helical span at residues 215 to 236; it reads QQQLISFGGLVMYIVLLFLFSK. At 237–244 the chain is on the cytoplasmic side; sequence HPTRVYWR. Residues 245-264 form a helical membrane-spanning segment; the sequence is PVFWGIGLQFLLGLLILRTR. Over 265–301 the chain is Extracellular; the sequence is PGFVAFDWMGKQVQTFLGYTDAGAQFVFGEKYTDHFF. The chain crosses the membrane as a helical span at residues 302–322; it reads AFKILPIVVFFSTVMSMLYYL. Residues 323–346 lie on the Cytoplasmic side of the membrane; the sequence is GLMQWIIRKVGWLMLVTMGSSPIE. An intramembrane region (helical) is located at residues 347–365; sequence SVVAAGNIFVGQTESPLLV. At 366 to 378 the chain is on the cytoplasmic side; the sequence is QPYLPHVTKSELH. The helical transmembrane segment at 379-401 threads the bilayer; the sequence is TIMTAGFATIAGSVLGAYISFGV. The Extracellular segment spans residues 402-403; that stretch reads SS. The chain crosses the membrane as a helical span at residues 404-425; it reads THLLTASVMSAPAALAVAKLFW. Over 426-460 the chain is Cytoplasmic; the sequence is PETEKPKITLKNAMKMENGDSRNLLEAATQGASSS. The chain crosses the membrane as a helical span at residues 461–486; the sequence is IPLVANIAANLIAFLALLSFVNSALS. The Extracellular portion of the chain corresponds to 487–524; that stretch reads WFGSMFDYPQLSFELICSYIFMPFSFMMGVDWQDRFMV. The helical intramembrane region spans 525-544; it reads AKLIGYKTFFNEFVAYEHLS. Topologically, residues 545–583 are extracellular; sequence KFINLRKAAGPKFVNGVQQYMSIRSETIATYALCGFANF. Residues 584–594 traverse the membrane as a helical segment; it reads GSLGIVIGGLT. Over 595–607 the chain is Cytoplasmic; it reads SIAPSRKRDIASG. A helical membrane pass occupies residues 608 to 630; the sequence is AMRALIAGTIACFMTACIAGMLS. The Extracellular portion of the chain corresponds to 631-705; it reads DTPVAINCHH…LNCGWIPNIP (75 aa).

This sequence belongs to the concentrative nucleoside transporter (CNT) (TC 2.A.41) family. In terms of assembly, homotrimer. Expressed in kidney; in the proximal tubule, glomerulus and cortical collecting duct.

It is found in the cell membrane. It catalyses the reaction thymidine(out) + 2 Na(+)(out) = thymidine(in) + 2 Na(+)(in). The catalysed reaction is cytidine(out) + 2 Na(+)(out) = cytidine(in) + 2 Na(+)(in). It carries out the reaction uridine(out) + 2 Na(+)(out) = uridine(in) + 2 Na(+)(in). The enzyme catalyses adenosine(out) + 2 Na(+)(out) = adenosine(in) + 2 Na(+)(in). It catalyses the reaction guanosine(out) + 2 Na(+)(out) = guanosine(in) + 2 Na(+)(in). The catalysed reaction is inosine(out) + 2 Na(+)(out) = inosine(in) + 2 Na(+)(in). Its function is as follows. Sodium-dependent, pyrimidine- and purine-selective. Involved in the homeostasis of endogenous nucleosides. Exhibits the transport characteristics of the nucleoside transport system cib or N3 subtype (N3/cib) (with marked transport of both thymidine and inosine). Employs a 2:1 sodium/nucleoside ratio. Also able to transport gemcitabine, 3'-azido-3'-deoxythymidine (AZT), ribavirin and 3-deazauridine. This Rattus norvegicus (Rat) protein is Solute carrier family 28 member 3 (Slc28a3).